We begin with the raw amino-acid sequence, 405 residues long: Palmitoyltransferase PFA5 (405 aa).

5 helical membrane passes run 12–32 (YIKL…NYAI), 51–71 (IILW…WVLI), 154–174 (LFFM…LIYC), 191–211 (FIVL…LFGI), and 310–330 (FYTL…FIDI). The DHHC domain occupies 111 to 161 (YYCSNSNSIKLERSFFSKDVGYNVIKFDHYCIWIGQPIGQDNYLFFMKFMM).

The protein belongs to the DHHC palmitoyltransferase family. PFA5 subfamily. In terms of processing, autopalmitoylated.

It is found in the membrane. It catalyses the reaction L-cysteinyl-[protein] + hexadecanoyl-CoA = S-hexadecanoyl-L-cysteinyl-[protein] + CoA. The chain is Palmitoyltransferase PFA5 (PFA5) from Candida albicans (strain SC5314 / ATCC MYA-2876) (Yeast).